We begin with the raw amino-acid sequence, 160 residues long: Cyanate hydratase (160 aa).

Catalysis depends on residues R100, E103, and S126.

It belongs to the cyanase family.

The catalysed reaction is cyanate + hydrogencarbonate + 3 H(+) = NH4(+) + 2 CO2. Functionally, catalyzes the reaction of cyanate with bicarbonate to produce ammonia and carbon dioxide. This is Cyanate hydratase from Penicillium rubens (strain ATCC 28089 / DSM 1075 / NRRL 1951 / Wisconsin 54-1255) (Penicillium chrysogenum).